The sequence spans 396 residues: Small ribosomal subunit protein uS9m (396 aa).

Lys-287 is modified (N6-acetyllysine). Residues 374–396 are disordered; that stretch reads PRVRERKKPGQEGARRKFTWKKR.

Belongs to the universal ribosomal protein uS9 family. In terms of assembly, component of the mitochondrial small ribosomal subunit (mt-SSU). Mature mammalian 55S mitochondrial ribosomes consist of a small (28S) and a large (39S) subunit. The 28S small subunit contains a 12S ribosomal RNA (12S mt-rRNA) and 30 different proteins. The 39S large subunit contains a 16S rRNA (16S mt-rRNA), a copy of mitochondrial valine transfer RNA (mt-tRNA(Val)), which plays an integral structural role, and 52 different proteins.

It localises to the mitochondrion. The protein is Small ribosomal subunit protein uS9m (MRPS9) of Homo sapiens (Human).